The sequence spans 1238 residues: Cryptic loci regulator protein 1 (1238 aa).

Disordered stretches follow at residues 133–156 (TQQQVSNVSHGNFKPNSSVNTEPN), 196–237 (PFSN…PSSI), 277–303 (ASLYDRSPSKKDITSSRNTSSYNLGSM), 546–568 (QKSVSSETTLVKPSSTSSYIDTT), 696–735 (SDNTDCSLPKPSNSKLSSISSDGDASSNRMAVPDKSPFVH), and 784–824 (TLKE…QSRS). Positions 214–223 (NVKNNSKKTA) are enriched in polar residues. The span at 224-237 (SSVNSNHSSIPSSI) shows a compositional bias: low complexity. Residues 291–303 (SSRNTSSYNLGSM) are compositionally biased toward polar residues. The span at 702-723 (SLPKPSNSKLSSISSDGDASSN) shows a compositional bias: low complexity. Basic and acidic residues predominate over residues 785–796 (LKEDASSTKQAK). The span at 810-819 (NDVSKNNSGE) shows a compositional bias: polar residues. The C2H2-type zinc-finger motif lies at 1062–1087 (LNCEVSNCKKCFSNYEDMFKHLQHSH).

As to quaternary structure, interacts with clr3.

It is found in the nucleus. The protein resides in the chromosome. Its subcellular location is the centromere. The protein localises to the telomere. Its function is as follows. Regulates silencing of the mat2 and mat3 loci. Organizes the chromatin structure of the mating-type region where it also participates in establishing the 'cold spot' for recombination. Required for proper positioning of nucleosomes at heterochromatic loci and for transcriptional gene silencing (TGS) function of the Snf2/Hdac-containing repressor complex (SHREC). This chain is Cryptic loci regulator protein 1 (clr1), found in Schizosaccharomyces pombe (strain 972 / ATCC 24843) (Fission yeast).